We begin with the raw amino-acid sequence, 184 residues long: Lipid A acyltransferase PagP (184 aa).

Positions 1 to 22 (MNIRHGIIAMSSTMLVPLAAEA) are cleaved as a signal peptide. Catalysis depends on residues histidine 57, aspartate 100, and serine 101.

Belongs to the lipid A palmitoyltransferase family. As to quaternary structure, homodimer.

The protein localises to the cell outer membrane. The catalysed reaction is a lipid A + a 1,2-diacyl-sn-glycero-3-phosphocholine = a hepta-acyl lipid A + a 2-acyl-sn-glycero-3-phosphocholine. It catalyses the reaction a lipid IVA + a 1,2-diacyl-sn-glycero-3-phosphocholine = a lipid IVB + a 2-acyl-sn-glycero-3-phosphocholine. It carries out the reaction a lipid IIA + a 1,2-diacyl-sn-glycero-3-phosphocholine = a lipid IIB + a 2-acyl-sn-glycero-3-phosphocholine. Transfers a fatty acid residue from the sn-1 position of a phospholipid to the N-linked hydroxyfatty acid chain on the proximal unit of lipid A or its precursors. The sequence is that of Lipid A acyltransferase PagP from Methylobacillus flagellatus (strain ATCC 51484 / DSM 6875 / VKM B-1610 / KT).